A 795-amino-acid chain; its full sequence is Levansucrase (795 aa).

An N-terminal signal peptide occupies residues 1-36; that stretch reads METKVRKKMYKKGKFWVVATITTAMLTGIGLSSVQA. Composition is skewed to polar residues over residues 42 to 66 and 112 to 130; these read TQVS…SAAE and QAAT…GQTN. Disordered stretches follow at residues 42-83 and 103-138; these read TQVS…NPAA and ESKA…ATKE. Residues Trp-245, Asp-246, and Ser-315 each contribute to the sucrose site. Asp-246 functions as the Nucleophile in the catalytic mechanism. Residue Asp-394 coordinates Ca(2+). Arg-399 and Asp-400 together coordinate sucrose. The Ca(2+) site is built by Gln-425, Asn-464, and Asp-496. Glu-497 provides a ligand contact to sucrose. Glu-499 acts as the Proton donor/acceptor in catalysis. Residue Arg-517 coordinates sucrose. A helical transmembrane segment spans residues 774–794; the sequence is GNSFFAALLALFSAFCVSIGF.

This sequence belongs to the glycosyl hydrolase 68 family.

It is found in the cell membrane. The protein resides in the cell surface. The catalysed reaction is [6)-beta-D-fructofuranosyl-(2-&gt;](n) alpha-D-glucopyranoside + sucrose = [6)-beta-D-fructofuranosyl-(2-&gt;](n+1) alpha-D-glucopyranoside + D-glucose. Ca(2+) may play an important structural role and promote stability of levansucrase. Its function is as follows. Catalyzes the synthesis of levan, a fructose polymer, by transferring the fructosyl moiety from sucrose to a growing acceptor molecule. Also displays sucrose hydrolase activity. The protein is Levansucrase of Streptococcus mutans serotype c (strain ATCC 700610 / UA159).